Consider the following 314-residue polypeptide: Methionyl-tRNA formyltransferase (314 aa).

Position 111–114 (111–114 (SLLP)) interacts with (6S)-5,6,7,8-tetrahydrofolate.

The protein belongs to the Fmt family.

The catalysed reaction is L-methionyl-tRNA(fMet) + (6R)-10-formyltetrahydrofolate = N-formyl-L-methionyl-tRNA(fMet) + (6S)-5,6,7,8-tetrahydrofolate + H(+). In terms of biological role, attaches a formyl group to the free amino group of methionyl-tRNA(fMet). The formyl group appears to play a dual role in the initiator identity of N-formylmethionyl-tRNA by promoting its recognition by IF2 and preventing the misappropriation of this tRNA by the elongation apparatus. In Nitrobacter winogradskyi (strain ATCC 25391 / DSM 10237 / CIP 104748 / NCIMB 11846 / Nb-255), this protein is Methionyl-tRNA formyltransferase.